A 275-amino-acid polypeptide reads, in one-letter code: Endolytic peptidoglycan transglycosylase RlpA (275 aa).

The N-terminal stretch at 1-22 (MQIKTITLKLSAVSLGALFFSG) is a signal peptide. C23 carries the N-palmitoyl cysteine lipid modification. A lipid anchor (S-diacylglycerol cysteine) is attached at C23. The 76-residue stretch at 200 to 275 (IYEGGNFMVQ…AFAGAFVVRE (76 aa)) folds into the SPOR domain.

This sequence belongs to the RlpA family.

Its subcellular location is the cell membrane. Lytic transglycosylase with a strong preference for naked glycan strands that lack stem peptides. The chain is Endolytic peptidoglycan transglycosylase RlpA from Campylobacter jejuni subsp. jejuni serotype O:2 (strain ATCC 700819 / NCTC 11168).